The primary structure comprises 270 residues: MTARDFLEFRERLAPASGFQSAQLREIEILLGLEDTQRISIGNGCSYRDALKLPGGAPSSSAQRVEARAADGPSFKHCLYDWLSRVPIDGSNAPADITRFLEAYLASLRAENDRRLKLASSGLAAAEIEQLRARYAAEDAGAQAFLLAEDDPQASDAERETRRAGRAAMLFIESYRELPQLAWPHALLESVLELEQAMLIWRQRHARMVERFIGRRIGTGGSSGVDYLDQTARYRIFTELWTVRSLLLRKAAVPQIRSSAGYGFVMEGFA.

Belongs to the tryptophan 2,3-dioxygenase family.

The sequence is that of Tryptophan 2,3-dioxygenase-like protein from Xanthomonas campestris pv. campestris (strain 8004).